The primary structure comprises 568 residues: Urease subunit alpha (568 aa).

In terms of domain architecture, Urease spans 131 to 568 (GGIDTHIHFI…LPMAQRYFLF (438 aa)). Ni(2+) contacts are provided by His-136, His-138, and Lys-219. Lys-219 is subject to N6-carboxylysine. Substrate is bound at residue His-221. 2 residues coordinate Ni(2+): His-248 and His-274. Catalysis depends on His-322, which acts as the Proton donor. Asp-362 is a binding site for Ni(2+).

This sequence belongs to the metallo-dependent hydrolases superfamily. Urease alpha subunit family. As to quaternary structure, heterotrimer of UreA (gamma), UreB (beta) and UreC (alpha) subunits. Three heterotrimers associate to form the active enzyme. Ni cation is required as a cofactor. In terms of processing, carboxylation allows a single lysine to coordinate two nickel ions.

Its subcellular location is the cytoplasm. The catalysed reaction is urea + 2 H2O + H(+) = hydrogencarbonate + 2 NH4(+). It participates in nitrogen metabolism; urea degradation; CO(2) and NH(3) from urea (urease route): step 1/1. The chain is Urease subunit alpha from Trichormus variabilis (strain ATCC 29413 / PCC 7937) (Anabaena variabilis).